The following is a 612-amino-acid chain: 1-deoxy-D-xylulose-5-phosphate synthase (612 aa).

Residues His-77 and 118–120 (GHS) contribute to the thiamine diphosphate site. Asp-147 lines the Mg(2+) pocket. Thiamine diphosphate contacts are provided by residues 148 to 149 (AA), Asn-176, Tyr-288, and Glu-365. Mg(2+) is bound at residue Asn-176.

It belongs to the transketolase family. DXPS subfamily. Homodimer. Mg(2+) serves as cofactor. Requires thiamine diphosphate as cofactor.

It catalyses the reaction D-glyceraldehyde 3-phosphate + pyruvate + H(+) = 1-deoxy-D-xylulose 5-phosphate + CO2. Its pathway is metabolic intermediate biosynthesis; 1-deoxy-D-xylulose 5-phosphate biosynthesis; 1-deoxy-D-xylulose 5-phosphate from D-glyceraldehyde 3-phosphate and pyruvate: step 1/1. In terms of biological role, catalyzes the acyloin condensation reaction between C atoms 2 and 3 of pyruvate and glyceraldehyde 3-phosphate to yield 1-deoxy-D-xylulose-5-phosphate (DXP). The sequence is that of 1-deoxy-D-xylulose-5-phosphate synthase from Malacoplasma penetrans (strain HF-2) (Mycoplasma penetrans).